Reading from the N-terminus, the 104-residue chain is Large ribosomal subunit protein bL21 (104 aa).

The protein belongs to the bacterial ribosomal protein bL21 family. As to quaternary structure, part of the 50S ribosomal subunit. Contacts protein L20.

This protein binds to 23S rRNA in the presence of protein L20. The protein is Large ribosomal subunit protein bL21 of Elusimicrobium minutum (strain Pei191).